We begin with the raw amino-acid sequence, 473 residues long: Photosystem II CP43 reaction center protein (473 aa).

Residues 1–14 (MKILYSLRRFYHVE) constitute a propeptide that is removed on maturation. At T15 the chain carries N-acetylthreonine. Phosphothreonine is present on T15. 5 helical membrane-spanning segments follow: residues 69 to 93 (LFEV…PHLA), 134 to 155 (LLGP…KDRN), 178 to 200 (KALY…RKIT), 255 to 275 (KPFA…LSYS), and 291 to 312 (WFNN…ASQA). E367 lines the [CaMn4O5] cluster pocket. A helical transmembrane segment spans residues 447 to 471 (RARAAAAGFEKGIDRDLEPVLYMNP).

Belongs to the PsbB/PsbC family. PsbC subfamily. PSII is composed of 1 copy each of membrane proteins PsbA, PsbB, PsbC, PsbD, PsbE, PsbF, PsbH, PsbI, PsbJ, PsbK, PsbL, PsbM, PsbT, PsbX, PsbY, PsbZ, Psb30/Ycf12, at least 3 peripheral proteins of the oxygen-evolving complex and a large number of cofactors. It forms dimeric complexes. Requires Binds multiple chlorophylls and provides some of the ligands for the Ca-4Mn-5O cluster of the oxygen-evolving complex. It may also provide a ligand for a Cl- that is required for oxygen evolution. PSII binds additional chlorophylls, carotenoids and specific lipids. as cofactor. Post-translationally, phosphorylated on threonine residue(s); phosphorylation increases with increasing light levels.

The protein resides in the plastid. It localises to the chloroplast thylakoid membrane. Its function is as follows. One of the components of the core complex of photosystem II (PSII). It binds chlorophyll and helps catalyze the primary light-induced photochemical processes of PSII. PSII is a light-driven water:plastoquinone oxidoreductase, using light energy to abstract electrons from H(2)O, generating O(2) and a proton gradient subsequently used for ATP formation. This Secale cereale (Rye) protein is Photosystem II CP43 reaction center protein.